The chain runs to 372 residues: 4-hydroxy-3-methylbut-2-en-1-yl diphosphate synthase (flavodoxin) (372 aa).

[4Fe-4S] cluster contacts are provided by cysteine 270, cysteine 273, cysteine 305, and glutamate 312.

Belongs to the IspG family. [4Fe-4S] cluster serves as cofactor.

It catalyses the reaction (2E)-4-hydroxy-3-methylbut-2-enyl diphosphate + oxidized [flavodoxin] + H2O + 2 H(+) = 2-C-methyl-D-erythritol 2,4-cyclic diphosphate + reduced [flavodoxin]. It functions in the pathway isoprenoid biosynthesis; isopentenyl diphosphate biosynthesis via DXP pathway; isopentenyl diphosphate from 1-deoxy-D-xylulose 5-phosphate: step 5/6. Its function is as follows. Converts 2C-methyl-D-erythritol 2,4-cyclodiphosphate (ME-2,4cPP) into 1-hydroxy-2-methyl-2-(E)-butenyl 4-diphosphate. The polypeptide is 4-hydroxy-3-methylbut-2-en-1-yl diphosphate synthase (flavodoxin) (Escherichia coli O8 (strain IAI1)).